A 429-amino-acid chain; its full sequence is Glutamate-1-semialdehyde 2,1-aminomutase (429 aa).

Lys-265 carries the post-translational modification N6-(pyridoxal phosphate)lysine.

It belongs to the class-III pyridoxal-phosphate-dependent aminotransferase family. HemL subfamily. Homodimer. Requires pyridoxal 5'-phosphate as cofactor.

It localises to the cytoplasm. It carries out the reaction (S)-4-amino-5-oxopentanoate = 5-aminolevulinate. It participates in porphyrin-containing compound metabolism; protoporphyrin-IX biosynthesis; 5-aminolevulinate from L-glutamyl-tRNA(Glu): step 2/2. In Chromohalobacter salexigens (strain ATCC BAA-138 / DSM 3043 / CIP 106854 / NCIMB 13768 / 1H11), this protein is Glutamate-1-semialdehyde 2,1-aminomutase.